Here is a 105-residue protein sequence, read N- to C-terminus: Small ribosomal subunit protein uS10 (105 aa).

Belongs to the universal ribosomal protein uS10 family. Part of the 30S ribosomal subunit.

Functionally, involved in the binding of tRNA to the ribosomes. The protein is Small ribosomal subunit protein uS10 of Acidobacterium capsulatum (strain ATCC 51196 / DSM 11244 / BCRC 80197 / JCM 7670 / NBRC 15755 / NCIMB 13165 / 161).